Here is a 316-residue protein sequence, read N- to C-terminus: Ornithine carbamoyltransferase (316 aa).

Residues 57 to 60, Gln84, Arg108, and 135 to 138 contribute to the carbamoyl phosphate site; these read STRT and HPCQ. L-ornithine contacts are provided by residues Asn166, Asp230, and 234 to 235; that span reads SM. Carbamoyl phosphate-binding positions include 269-270 and Arg297; that span reads CL.

It belongs to the aspartate/ornithine carbamoyltransferase superfamily. OTCase family.

The protein resides in the cytoplasm. It catalyses the reaction carbamoyl phosphate + L-ornithine = L-citrulline + phosphate + H(+). Its pathway is amino-acid biosynthesis; L-arginine biosynthesis; L-arginine from L-ornithine and carbamoyl phosphate: step 1/3. In terms of biological role, reversibly catalyzes the transfer of the carbamoyl group from carbamoyl phosphate (CP) to the N(epsilon) atom of ornithine (ORN) to produce L-citrulline. The sequence is that of Ornithine carbamoyltransferase from Bacillus cereus (strain ZK / E33L).